A 1432-amino-acid chain; its full sequence is MDQEVMDFFDFSKEFKREAAPQGYISSDPSIMATETNESKVPKREVIGTDYVPEIVAKEKCLLDRTLRDDCPQSKRNRTLDDLDTDDEGEETEIRRDDEYYKRYRFNLNRDKNLPIYAKREEILAAINAHPVVILKGQTGCGKTTQVPQYILDEGYKSGKYCNIVVTQPRRIAAISIANRVCQEREWQQDTVCSYQVGLHRPTSLEDTRLLYCTTGVLLNNLINKKTLTHYTHIVLDEVHERDQDMDFLLIVVRRLLATNSRHVKIILMSATIDARELADYFTTTNSVPPVITASHGRKHAIEKFYRDQMGSIRWKEEEDDQLVPQINDHGYRAAVKIIMVIDNMEREAAIQSRLSYDEALRYGAVLIFLPGIDEIDTMAENITSMLQSDRNIKVFIVRCFSLMTPENQRDVFHPPPPGFRKIILTTNIAESSITVPDVSYVIDFCLTKVLVTDTATSFSSLRLTWASKANCRQRAGRVGRLRSGRVYRMVNKSFYQREMAEFGIPEMLRMPLQNSVLRAKELEMGSPIEILALALSPPNLSDIQNTILLLKEVGALFLTVDGVYNAMDGDITYWGTIMSRLPLDTRLSRLIILGYVFNLLEEAIIIAAGLSMRGLYVNEGRRTQGADSFWMHYIFADGSGSDLVAIWRVYLTYLNMVEIAHEQESAIRWAKRFHVSLRSLKEMHLLVQELRWRCTNLGLIPFAVNPSQMMGDREKSIILKVIIAGAFYPNYFTRSKESCAEPDRNIYQTISGHDPCRTVYFTNFKPAYMGELYTRRIKELFQEARIPPENIDVTFQQGSQKVFVTFKQDDWLADSSKFVSVSGRVQSEVYKAVRMRLDRIQRPIRIMTQNNFMNYVQQRGIGDVIEGRWIPPTKPLNVELLALPSVFSKTITGLITCIISCGKFFFQPQSFAECIRNMSEIFNAPQQLRNYVINAGAITKGMMVLAKRDSNFQRATVIRPENQSNRQPMFYVRFIDYGDCALLSMQQLRLMPKELIQQYGDLPPRVFECRLAHVQPSSVVSGNNRWPTAANDLLKSVAKCGRIDIEVYSLFNNVAAVLIPMKDGIINDMLVELKLSRRSDEDYMSRKDHDFRLRRQESARYLTLTERQQINEEYLRSCQLPQDLDLPPPPLDKCNTIVMLKGPSSPLECSMQSIIRVGSSKRVNIDNASVNAVLLDADPQDHHDHLIVAHATVESTNGQTLTARGTTLMPNVQGFGALMVMLFCPTMQLKCNNEGTSYVSILAGLGCDPVTGEPYYAEHDVLINLDVNILEDDVVLINQIRYYIDSVFFNFKEEKDPAVSINERVSIYTQLRSLINRLLCKDRSYMQRNMSNSDFEWESNPELPMPNEPFGKRAIFPMHSLTELQEEDMGRLMHLRENCSMLHKWRNFEGTLPHMTCKLCNQLLESVPQLRLHLLTVLHRDREKQIDYCNQ.

The 168-residue stretch at 124–291 folds into the Helicase ATP-binding domain; sequence LAAINAHPVV…FTTTNSVPPV (168 aa). 137-144 lines the ATP pocket; it reads GQTGCGKT. Positions 237–240 match the DEAH box motif; sequence DEVH. A Helicase C-terminal domain is found at 337–524; the sequence is KIIMVIDNME…NSVLRAKELE (188 aa). The Tudor domain maps to 936 to 999; the sequence is AGAITKGMMV…RLMPKELIQQ (64 aa).

It belongs to the DEAD box helicase family. DEAH subfamily.

It is found in the cytoplasm. The enzyme catalyses ATP + H2O = ADP + phosphate + H(+). Functionally, probable ATP-binding RNA helicase which plays a central role during spermatogenesis and oogenesis by repressing transposable elements and preventing their mobilization, which is essential for the germline integrity. Acts via the piRNA metabolic process, which mediates the repression of transposable elements during meiosis by forming complexes composed of piRNAs and Piwi and govern the methylation and subsequent repression of transposons. Involved in the repression of LTR retrotransposon copia. Also involved in telomere regulation by repressing specialized telomeric retroelements HeT-A, TAHRE, and TART; Drosophila telomeres being maintained by transposition of specialized telomeric retroelements. Involved in telomeric trans-silencing, a repression mechanism by which a transposon or a transgene inserted in subtelomeric heterochromatin has the capacity to repress in trans in the female germline, a homologous transposon, or transgene located in euchromatin. Involved in the repression of testis-expressed Stellate genes by the homologous Su(Ste) repeats. Required for anteroposterior and dorsoventral axis formation during oogenesis. The protein is Probable ATP-dependent RNA helicase spindle-E (spn-E) of Drosophila erecta (Fruit fly).